Consider the following 93-residue polypeptide: UPF0223 protein LACR_0546 (93 aa).

This sequence belongs to the UPF0223 family.

The protein is UPF0223 protein LACR_0546 of Lactococcus lactis subsp. cremoris (strain SK11).